A 364-amino-acid polypeptide reads, in one-letter code: UDP-N-acetylglucosamine--N-acetylmuramyl-(pentapeptide) pyrophosphoryl-undecaprenol N-acetylglucosamine transferase (364 aa).

Residues 15–17 (TGG), N123, R164, S191, and Q286 contribute to the UDP-N-acetyl-alpha-D-glucosamine site.

This sequence belongs to the glycosyltransferase 28 family. MurG subfamily.

It is found in the cell inner membrane. It carries out the reaction di-trans,octa-cis-undecaprenyl diphospho-N-acetyl-alpha-D-muramoyl-L-alanyl-D-glutamyl-meso-2,6-diaminopimeloyl-D-alanyl-D-alanine + UDP-N-acetyl-alpha-D-glucosamine = di-trans,octa-cis-undecaprenyl diphospho-[N-acetyl-alpha-D-glucosaminyl-(1-&gt;4)]-N-acetyl-alpha-D-muramoyl-L-alanyl-D-glutamyl-meso-2,6-diaminopimeloyl-D-alanyl-D-alanine + UDP + H(+). Its pathway is cell wall biogenesis; peptidoglycan biosynthesis. Functionally, cell wall formation. Catalyzes the transfer of a GlcNAc subunit on undecaprenyl-pyrophosphoryl-MurNAc-pentapeptide (lipid intermediate I) to form undecaprenyl-pyrophosphoryl-MurNAc-(pentapeptide)GlcNAc (lipid intermediate II). The polypeptide is UDP-N-acetylglucosamine--N-acetylmuramyl-(pentapeptide) pyrophosphoryl-undecaprenol N-acetylglucosamine transferase (Prochlorococcus marinus subsp. pastoris (strain CCMP1986 / NIES-2087 / MED4)).